The chain runs to 1054 residues: Translation initiation factor IF-2 (1054 aa).

Disordered regions lie at residues 57–213, 225–248, 287–315, and 401–436; these read DKRK…AASC, DPLA…NPGD, SGRP…HGLQ, and DHAG…KQEL. Residues 92 to 104 are compositionally biased toward polar residues; the sequence is QEPSQAASDVSSP. Residues 111 to 213 are compositionally biased toward low complexity; it reads EASGAEAAAS…VTSGRRAASC (103 aa). Basic and acidic residues predominate over residues 401–418; that stretch reads DHAGRGRELVDVSKNKDK. Positions 552–721 constitute a tr-type G domain; sequence TRPPVVTVMG…VLQAEVLELT (170 aa). The tract at residues 561–568 is G1; sequence GHVDHGKT. 561 to 568 contacts GTP; that stretch reads GHVDHGKT. Residues 586–590 form a G2 region; sequence GITQH. The interval 607-610 is G3; sequence DTPG. GTP is bound by residues 607–611 and 661–664; these read DTPGH and NKMD. The G4 stretch occupies residues 661-664; sequence NKMD. The interval 697–699 is G5; it reads SAK.

It belongs to the TRAFAC class translation factor GTPase superfamily. Classic translation factor GTPase family. IF-2 subfamily.

Its subcellular location is the cytoplasm. Its function is as follows. One of the essential components for the initiation of protein synthesis. Protects formylmethionyl-tRNA from spontaneous hydrolysis and promotes its binding to the 30S ribosomal subunits. Also involved in the hydrolysis of GTP during the formation of the 70S ribosomal complex. In Stigmatella aurantiaca, this protein is Translation initiation factor IF-2 (infB).